Here is a 431-residue protein sequence, read N- to C-terminus: Gamma-glutamyl phosphate reductase (431 aa).

This sequence belongs to the gamma-glutamyl phosphate reductase family.

It localises to the cytoplasm. The catalysed reaction is L-glutamate 5-semialdehyde + phosphate + NADP(+) = L-glutamyl 5-phosphate + NADPH + H(+). It participates in amino-acid biosynthesis; L-proline biosynthesis; L-glutamate 5-semialdehyde from L-glutamate: step 2/2. Its function is as follows. Catalyzes the NADPH-dependent reduction of L-glutamate 5-phosphate into L-glutamate 5-semialdehyde and phosphate. The product spontaneously undergoes cyclization to form 1-pyrroline-5-carboxylate. In Acetivibrio thermocellus (strain ATCC 27405 / DSM 1237 / JCM 9322 / NBRC 103400 / NCIMB 10682 / NRRL B-4536 / VPI 7372) (Clostridium thermocellum), this protein is Gamma-glutamyl phosphate reductase.